Here is a 1940-residue protein sequence, read N- to C-terminus: Myosin-1B (1940 aa).

The region spanning 33-82 (DAKSSVFVVHAKESYVKSTIQSKESGKVTVKTEGGETLTVKEDQIFSMNP) is the Myosin N-terminal SH3-like domain. The Myosin motor domain maps to 86-783 (DKIEDMAMMT…LLGLLEEMRD (698 aa)). Position 130 is an N6,N6,N6-trimethyllysine (lysine 130). 179-186 (GESGAGKT) lines the ATP pocket. Actin-binding stretches follow at residues 660–682 (LNKL…IPNE) and 762–776 (KFGH…GLLG). An IQ domain is found at 786-815 (LAQLITRTQARCRGFLMRVEFKKMMERRES). Positions 844–1940 (LLKSAESEKE…EIGKKAESEE (1097 aa)) form a coiled coil. A disordered region spans residues 1912 to 1940 (EERADIAESQVNKLRAKSREIGKKAESEE). Over residues 1928 to 1940 (KSREIGKKAESEE) the composition is skewed to basic and acidic residues.

The protein belongs to the TRAFAC class myosin-kinesin ATPase superfamily. Myosin family. In terms of assembly, muscle myosin is a hexameric protein that consists of 2 heavy chain subunits (MHC), 2 alkali light chain subunits (MLC) and 2 regulatory light chain subunits (MLC-2).

It localises to the cytoplasm. Its subcellular location is the myofibril. Its function is as follows. Muscle contraction. The chain is Myosin-1B (MYH1B) from Gallus gallus (Chicken).